The following is a 163-amino-acid chain: Probable phosphotransferase enzyme IIB component M6_Spy0801 (163 aa).

Residues 1 to 163 (MITQIRVDDR…TKVHLSQLVN (163 aa)) enclose the PTS EIIB type-4 domain. Catalysis depends on H13, which acts as the Pros-phosphohistidine intermediate.

Its subcellular location is the cytoplasm. Functionally, the phosphoenolpyruvate-dependent sugar phosphotransferase system (sugar PTS), a major carbohydrate active -transport system, catalyzes the phosphorylation of incoming sugar substrates concomitantly with their translocation across the cell membrane. In Streptococcus pyogenes serotype M6 (strain ATCC BAA-946 / MGAS10394), this protein is Probable phosphotransferase enzyme IIB component M6_Spy0801.